We begin with the raw amino-acid sequence, 791 residues long: ATP-dependent 6-phosphofructokinase, platelet type (791 aa).

Position 1 is an N-acetylmethionine (M1). Residues M1–I399 form an N-terminal catalytic PFK domain 1 region. S6 carries the post-translational modification Phosphoserine. Residue S12 is modified to Phosphoserine; by PKA. Position 21 is a phosphoserine (S21). Residues G34, R97–S98, and G127–S130 contribute to the ATP site. A Phosphoserine modification is found at S142. Residues S173 to D175, R210, M217 to R219, E273, R301, and H307 to R310 each bind substrate. Residue D175 is the Proton acceptor of the active site. S386 is subject to Phosphoserine. The residue at position 395 (K395) is an N6-acetyllysine. An interdomain linker region spans residues K400–C411. Positions N412–I791 are C-terminal regulatory PFK domain 2. R481 contributes to the beta-D-fructose 2,6-bisphosphate binding site. K486 carries the N6-acetyllysine modification. Beta-D-fructose 2,6-bisphosphate contacts are provided by residues T538–N542, R576, M583–G585, and E639. O-linked (GlcNAc) serine glycosylation occurs at S540. Y651 is subject to Phosphotyrosine. Residues R665 and H671–Q674 contribute to the beta-D-fructose 2,6-bisphosphate site. K688 is subject to N6-acetyllysine. R744 serves as a coordination point for beta-D-fructose 2,6-bisphosphate.

This sequence belongs to the phosphofructokinase type A (PFKA) family. ATP-dependent PFK group I subfamily. Eukaryotic two domain clade 'E' sub-subfamily. In terms of assembly, homo- and heterotetramers. Phosphofructokinase (PFK) enzyme functions as a tetramer composed of different combinations of 3 types of subunits, called PFKM (M), PFKL (L) and PFKP (P). The composition of the PFK tetramer differs according to the tissue type it is present in. The kinetic and regulatory properties of the tetrameric enzyme are dependent on the subunit composition, hence can vary across tissues. Interacts with ATG4B; promoting phosphorylation of ATG4B. The cofactor is Mg(2+). Post-translationally, glcNAcylation decreases enzyme activity. Phosphorylation at Ser-386 promotes interaction with ATG4B.

It is found in the cytoplasm. The catalysed reaction is beta-D-fructose 6-phosphate + ATP = beta-D-fructose 1,6-bisphosphate + ADP + H(+). It functions in the pathway carbohydrate degradation; glycolysis; D-glyceraldehyde 3-phosphate and glycerone phosphate from D-glucose: step 3/4. Its activity is regulated as follows. Allosterically activated by ADP, AMP, or fructose 2,6-bisphosphate, and allosterically inhibited by ATP or citrate. Its function is as follows. Catalyzes the phosphorylation of D-fructose 6-phosphate to fructose 1,6-bisphosphate by ATP, the first committing step of glycolysis. The protein is ATP-dependent 6-phosphofructokinase, platelet type (PFKP) of Oryctolagus cuniculus (Rabbit).